The following is a 396-amino-acid chain: Sialyltransferase-like protein 2 (396 aa).

Over methionine 1–leucine 6 the chain is Cytoplasmic. The chain crosses the membrane as a helical; Signal-anchor for type II membrane protein span at residues proline 7–arginine 23. Topologically, residues arginine 24–arginine 396 are lumenal. N-linked (GlcNAc...) asparagine glycans are attached at residues asparagine 72, asparagine 260, and asparagine 304.

It belongs to the glycosyltransferase 29 family.

It localises to the golgi apparatus membrane. Functionally, does not possess sialyltransferase-like activity in vitro. The sequence is that of Sialyltransferase-like protein 2 from Oryza sativa subsp. indica (Rice).